A 309-amino-acid chain; its full sequence is Homoserine kinase (309 aa).

An ATP-binding site is contributed by 91 to 101 (PIGSGLGSSAC).

It belongs to the GHMP kinase family. Homoserine kinase subfamily.

It is found in the cytoplasm. It carries out the reaction L-homoserine + ATP = O-phospho-L-homoserine + ADP + H(+). Its pathway is amino-acid biosynthesis; L-threonine biosynthesis; L-threonine from L-aspartate: step 4/5. In terms of biological role, catalyzes the ATP-dependent phosphorylation of L-homoserine to L-homoserine phosphate. This is Homoserine kinase from Yersinia enterocolitica serotype O:8 / biotype 1B (strain NCTC 13174 / 8081).